The following is a 208-amino-acid chain: Regulator of G-protein signaling 4 (208 aa).

Residues C2, C12, and C95 are each lipidated (S-palmitoyl cysteine). In terms of domain architecture, RGS spans 62-178; the sequence is SLENLIHHDR…LKSPYLDLVS (117 aa).

In terms of processing, palmitoylated on Cys-2 and/or Cys-12. Phosphorylated by cyclic GMP-dependent protein kinase. As to expression, expressed in the developing nervous system.

Inhibits signal transduction by increasing the GTPase activity of G protein alpha subunits thereby driving them into their inactive GDP-bound form. Activity on G(z)-alpha is inhibited by phosphorylation of the G-protein. Activity on G(z)-alpha and G(i)-alpha-1 is inhibited by palmitoylation of the G-protein. This is Regulator of G-protein signaling 4 (RGS4) from Gallus gallus (Chicken).